The chain runs to 348 residues: Outer membrane protein assembly factor BamC (348 aa).

An N-terminal signal peptide occupies residues 1-24 (MATLLQTSKVMKVAGLSLVVFLAA). C25 carries the N-palmitoyl cysteine lipid modification. C25 carries S-diacylglycerol cysteine lipidation. The interval 211–230 (SQQQEEAGQNNAKDSGALTV) is disordered.

This sequence belongs to the BamC family. In terms of assembly, part of the Bam complex, which is composed of the outer membrane protein BamA, and four lipoproteins BamB, BamC, BamD and BamE.

It is found in the cell outer membrane. Its function is as follows. Part of the outer membrane protein assembly complex, which is involved in assembly and insertion of beta-barrel proteins into the outer membrane. The polypeptide is Outer membrane protein assembly factor BamC (Xenorhabdus nematophila (strain ATCC 19061 / DSM 3370 / CCUG 14189 / LMG 1036 / NCIMB 9965 / AN6)).